The sequence spans 201 residues: UPF0301 protein Mvan_6057 (201 aa).

The protein belongs to the UPF0301 (AlgH) family.

The sequence is that of UPF0301 protein Mvan_6057 from Mycolicibacterium vanbaalenii (strain DSM 7251 / JCM 13017 / BCRC 16820 / KCTC 9966 / NRRL B-24157 / PYR-1) (Mycobacterium vanbaalenii).